Reading from the N-terminus, the 318-residue chain is D-alanine--D-alanine ligase (318 aa).

The 196-residue stretch at 116 to 311 folds into the ATP-grasp domain; that stretch reads KQVWQSLGIP…FQQLVLAILA (196 aa). ATP is bound at residue 142-197; that stretch reads SAELGFPLIVKPAHEGSSIGMAKVNSEQELVAAWKDAAKYDSQVLVEQWIHGPEFT. Mg(2+) contacts are provided by aspartate 265, glutamate 278, and asparagine 280.

The protein belongs to the D-alanine--D-alanine ligase family. Mg(2+) serves as cofactor. Mn(2+) is required as a cofactor.

It is found in the cytoplasm. It catalyses the reaction 2 D-alanine + ATP = D-alanyl-D-alanine + ADP + phosphate + H(+). It participates in cell wall biogenesis; peptidoglycan biosynthesis. Its function is as follows. Cell wall formation. This is D-alanine--D-alanine ligase from Pseudomonas entomophila (strain L48).